Here is a 194-residue protein sequence, read N- to C-terminus: UPF0232 protein MSMEG_0004/MSMEI_0006 (194 aa).

The segment covering 1-14 (MTGPFDDDGPEEDA) has biased composition (acidic residues). Residues 1–81 (MTGPFDDDGP…GPGPDARDPQ (81 aa)) form a disordered region. Basic and acidic residues predominate over residues 30–52 (DLVRRTLEEARGAARSQGKDVGR).

It belongs to the UPF0232 family.

This Mycolicibacterium smegmatis (strain ATCC 700084 / mc(2)155) (Mycobacterium smegmatis) protein is UPF0232 protein MSMEG_0004/MSMEI_0006.